A 696-amino-acid polypeptide reads, in one-letter code: Serotransferrin (696 aa).

Transferrin-like domains are found at residues 6–332 (VRWC…NLRE) and 346–672 (VRWC…NLRK). 2 cysteine pairs are disulfide-bonded: C9–C47 and C19–C38. Residue R23 is modified to Dimethylated arginine. A glycan (N-linked (GlcNAc...) asparagine) is linked at N25. Residues D62 and Y94 each contribute to the Fe(3+) site. Cystine bridges form between C117-C198, C157-C173, C160-C181, C170-C183, and C231-C245. 4 residues coordinate hydrogencarbonate: T119, R123, A125, and G126. Y192 is a Fe(3+) binding site. H253 serves as a coordination point for Fe(3+). 11 disulfide bridges follow: C343/C605, C349/C381, C359/C372, C406/C682, C423/C646, C456/C532, C480/C673, C490/C504, C501/C515, C572/C586, and C624/C629. A Phosphoserine modification is found at S374. Fe(3+)-binding residues include D396 and Y431. Hydrogencarbonate contacts are provided by T458, R462, A464, and G465. Residue N497 is glycosylated (N-linked (GlcNAc...) asparagine). Y526 serves as a coordination point for Fe(3+). H594 serves as a coordination point for Fe(3+). A Phosphoserine modification is found at S674.

The protein belongs to the transferrin family. As to quaternary structure, monomer. Part of a complex composed of SLC40A1/ferroportin, TF/transferrin and HEPH/hephaestin that transfers iron from cells to transferrin. Expressed by the liver and secreted in plasma.

It is found in the secreted. Functionally, transferrins are iron binding transport proteins which can bind two Fe(3+) ions in association with the binding of an anion, usually bicarbonate. It is responsible for the transport of iron from sites of absorption and heme degradation to those of storage and utilization. Serum transferrin may also have a further role in stimulating cell proliferation. In Sus scrofa (Pig), this protein is Serotransferrin (TF).